The following is a 655-amino-acid chain: Large subunit GTPase 1 homolog (655 aa).

The segment at 1–31 (MGRRRAPGGGSLGRVLIRHQTQRSRSHRHTD) is disordered. Residues 16-28 (LIRHQTQRSRSHR) show a composition bias toward basic residues. A phosphoserine mark is found at S93 and S97. The 278-residue stretch at 164–441 (WRQLWRVIER…LCDCPGLVMP (278 aa)) folds into the CP-type G domain. 212–215 (NKAD) contacts GTP. Phosphoserine is present on S252. Residues 253 to 359 (KDEVNSVAGE…ENSQMSNKSH (107 aa)) form a disordered region. Residues 288-327 (EESESDDDDSEYEDCQEDEEEDWQTCSEEDSNPEEGQEEG) show a composition bias toward acidic residues. A compositionally biased stretch (basic and acidic residues) spans 328-339 (GCDRDQKEHGPE). Polar residues predominate over residues 344–359 (QSRASPENSQMSNKSH). GTP-binding positions include 390–397 (GYPNVGKS) and 434–437 (DCPG). A disordered region spans residues 625-655 (SAENVPGKPWKKHGNRNKKEKSRRLYRHLDV). Over residues 633 to 655 (PWKKHGNRNKKEKSRRLYRHLDV) the composition is skewed to basic residues.

The protein belongs to the TRAFAC class YlqF/YawG GTPase family. LSG1 subfamily.

The protein localises to the cytoplasm. It is found in the endoplasmic reticulum. The protein resides in the nucleus. Its subcellular location is the cajal body. It carries out the reaction GTP + H2O = GDP + phosphate + H(+). In terms of biological role, functions as a GTPase. May act by mediating the release of NMD3 from the 60S ribosomal subunit after export into the cytoplasm during the 60S ribosomal subunit maturation. The protein is Large subunit GTPase 1 homolog of Rattus norvegicus (Rat).